Reading from the N-terminus, the 182-residue chain is CDP-diacylglycerol--glycerol-3-phosphate 3-phosphatidyltransferase (182 aa).

Residues 2–12 (QFNIPTLLTLF) are Cytoplasmic-facing. Residues 13–37 (RVALIPFFVLAFYLPFVWAPLLCAL) form a helical membrane-spanning segment. Over 38–60 (IFVFAAVTDWFDGFLARRWKQTT) the chain is Periplasmic. Residues 61 to 81 (RFGAFLDPVADKVMVAVALVL) form a helical membrane-spanning segment. Residues 82–86 (VAEYY) are Cytoplasmic-facing. Residues 87–107 (HSWWITLPAATMIAREIIISA) form a helical membrane-spanning segment. Over 108 to 145 (LREWMAEIGKRSSVAVSWIGKVKTTAQMMALFALLWRP) the chain is Periplasmic. A helical membrane pass occupies residues 146 to 168 (ERIVEGIGVAALYIAAVLTFWSM). At 169-181 (FQYLNAARHDLLE) the chain is on the cytoplasmic side.

It belongs to the CDP-alcohol phosphatidyltransferase class-I family.

It localises to the cell inner membrane. It carries out the reaction a CDP-1,2-diacyl-sn-glycerol + sn-glycerol 3-phosphate = a 1,2-diacyl-sn-glycero-3-phospho-(1'-sn-glycero-3'-phosphate) + CMP + H(+). It functions in the pathway phospholipid metabolism; phosphatidylglycerol biosynthesis; phosphatidylglycerol from CDP-diacylglycerol: step 1/2. Its function is as follows. Catalyzes the conversion of cytidine diphosphate diacylglycerol (CDP-DG) and glycerol 3-phosphate into phosphatidylglycerol. Essential for the synthesis of anionic phospholipids, thereby playing a role in balancing the ratio of zwitterionic and anionic phospholipids, which is thought to be important for normal membrane function. The protein is CDP-diacylglycerol--glycerol-3-phosphate 3-phosphatidyltransferase of Pectobacterium atrosepticum (strain SCRI 1043 / ATCC BAA-672) (Erwinia carotovora subsp. atroseptica).